The primary structure comprises 533 residues: tRNA(Ile)-lysidine synthase (533 aa).

Residue 21-26 (SGGADS) participates in ATP binding. The CMP/dCMP-type deaminase domain occupies 377-500 (DLLDTAMGEA…DLLSSHWGHV (124 aa)).

This sequence belongs to the tRNA(Ile)-lysidine synthase family.

Its subcellular location is the cytoplasm. The catalysed reaction is cytidine(34) in tRNA(Ile2) + L-lysine + ATP = lysidine(34) in tRNA(Ile2) + AMP + diphosphate + H(+). Its function is as follows. Ligates lysine onto the cytidine present at position 34 of the AUA codon-specific tRNA(Ile) that contains the anticodon CAU, in an ATP-dependent manner. Cytidine is converted to lysidine, thus changing the amino acid specificity of the tRNA from methionine to isoleucine. The protein is tRNA(Ile)-lysidine synthase of Deinococcus deserti (strain DSM 17065 / CIP 109153 / LMG 22923 / VCD115).